A 116-amino-acid chain; its full sequence is Aspartate 1-decarboxylase (116 aa).

S25 acts as the Schiff-base intermediate with substrate; via pyruvic acid in catalysis. The residue at position 25 (S25) is a Pyruvic acid (Ser). T57 is a binding site for substrate. Residue Y58 is the Proton donor of the active site. 73–75 (GAA) contacts substrate.

The protein belongs to the PanD family. In terms of assembly, heterooctamer of four alpha and four beta subunits. Pyruvate serves as cofactor. Post-translationally, is synthesized initially as an inactive proenzyme, which is activated by self-cleavage at a specific serine bond to produce a beta-subunit with a hydroxyl group at its C-terminus and an alpha-subunit with a pyruvoyl group at its N-terminus.

The protein localises to the cytoplasm. The enzyme catalyses L-aspartate + H(+) = beta-alanine + CO2. Its pathway is cofactor biosynthesis; (R)-pantothenate biosynthesis; beta-alanine from L-aspartate: step 1/1. Functionally, catalyzes the pyruvoyl-dependent decarboxylation of aspartate to produce beta-alanine. The polypeptide is Aspartate 1-decarboxylase (Syntrophus aciditrophicus (strain SB)).